Here is a 122-residue protein sequence, read N- to C-terminus: Small ribosomal subunit protein uS13 (122 aa).

A disordered region spans residues 94–122 (LSLPVRGQRTKTNSRTRKGKRKTVAGKKK). Over residues 101-122 (QRTKTNSRTRKGKRKTVAGKKK) the composition is skewed to basic residues.

This sequence belongs to the universal ribosomal protein uS13 family. Part of the 30S ribosomal subunit. Forms a loose heterodimer with protein S19. Forms two bridges to the 50S subunit in the 70S ribosome.

Its function is as follows. Located at the top of the head of the 30S subunit, it contacts several helices of the 16S rRNA. In the 70S ribosome it contacts the 23S rRNA (bridge B1a) and protein L5 of the 50S subunit (bridge B1b), connecting the 2 subunits; these bridges are implicated in subunit movement. Contacts the tRNAs in the A and P-sites. The chain is Small ribosomal subunit protein uS13 from Chlamydia muridarum (strain MoPn / Nigg).